The sequence spans 178 residues: Large ribosomal subunit protein uL6c (178 aa).

This sequence belongs to the universal ribosomal protein uL6 family. As to quaternary structure, part of the 50S ribosomal subunit.

The protein localises to the plastid. The protein resides in the chloroplast. Functionally, binds 23S rRNA. The polypeptide is Large ribosomal subunit protein uL6c (rpl6) (Phaeodactylum tricornutum (strain CCAP 1055/1)).